The following is a 461-amino-acid chain: Tubulin gamma-1 chain (461 aa).

Alanine 142–glycine 148 is a GTP binding site.

This sequence belongs to the tubulin family.

Its subcellular location is the cytoplasm. The protein localises to the cytoskeleton. It is found in the microtubule organizing center. It localises to the centrosome. Its function is as follows. Tubulin is the major constituent of microtubules. The gamma chain is found at microtubule organizing centers (MTOC) such as the spindle poles or the centrosome, suggesting that it is involved in the minus-end nucleation of microtubule assembly. This Euplotoides octocarinatus (Freshwater ciliate) protein is Tubulin gamma-1 chain.